A 346-amino-acid chain; its full sequence is Phosphoribosylformylglycinamidine cyclo-ligase (346 aa).

Belongs to the AIR synthase family.

The protein localises to the cytoplasm. The catalysed reaction is 2-formamido-N(1)-(5-O-phospho-beta-D-ribosyl)acetamidine + ATP = 5-amino-1-(5-phospho-beta-D-ribosyl)imidazole + ADP + phosphate + H(+). It participates in purine metabolism; IMP biosynthesis via de novo pathway; 5-amino-1-(5-phospho-D-ribosyl)imidazole from N(2)-formyl-N(1)-(5-phospho-D-ribosyl)glycinamide: step 2/2. In Brevibacillus brevis (strain 47 / JCM 6285 / NBRC 100599), this protein is Phosphoribosylformylglycinamidine cyclo-ligase.